Reading from the N-terminus, the 490-residue chain is GTPase Der (490 aa).

EngA-type G domains are found at residues 3-166 (PVIA…PRDE) and 196-369 (IKIA…KSAV). Residues 9 to 16 (GRPNVGKS), 56 to 60 (DTGGI), 118 to 121 (NKID), 202 to 209 (GRPNVGKS), 249 to 253 (DTAGV), and 314 to 317 (NKWD) contribute to the GTP site. The region spanning 370–454 (TRWPTSRLTQ…PIRIEFKGGE (85 aa)) is the KH-like domain. Residues 452–490 (GGENPYEGNKNTLTDRQVNKKRRMMSHHKKADKKRRDKR) form a disordered region. The segment covering 470-490 (NKKRRMMSHHKKADKKRRDKR) has biased composition (basic residues).

This sequence belongs to the TRAFAC class TrmE-Era-EngA-EngB-Septin-like GTPase superfamily. EngA (Der) GTPase family. As to quaternary structure, associates with the 50S ribosomal subunit.

Functionally, GTPase that plays an essential role in the late steps of ribosome biogenesis. The sequence is that of GTPase Der from Pseudomonas syringae pv. syringae (strain B728a).